The primary structure comprises 715 residues: Probable serine/threonine-protein kinase MARK-B (715 aa).

The segment covering Ser-24 to Ser-37 has biased composition (low complexity). Positions Ser-24–Tyr-65 are disordered. The 256-residue stretch at Tyr-65 to Val-320 folds into the Protein kinase domain. Residues Ile-71–Val-79 and Lys-94 each bind ATP. Asp-187 functions as the Proton acceptor in the catalytic mechanism. Residues Lys-335 to Gln-344 are compositionally biased toward basic and acidic residues. Disordered stretches follow at residues Lys-335–Asn-399 and Cys-446–Thr-530. A compositionally biased stretch (low complexity) spans Gln-345–Ser-368. Polar residues predominate over residues Ile-381 to Asn-399. 2 stretches are compositionally biased toward low complexity: residues Ser-451–Ser-478 and Ser-487–Ser-513. The span at Gln-517–His-527 shows a compositional bias: basic residues. One can recognise a KA1 domain in the interval Leu-666–Leu-715.

The protein belongs to the protein kinase superfamily. CAMK Ser/Thr protein kinase family. SNF1 subfamily.

The enzyme catalyses L-seryl-[protein] + ATP = O-phospho-L-seryl-[protein] + ADP + H(+). The catalysed reaction is L-threonyl-[protein] + ATP = O-phospho-L-threonyl-[protein] + ADP + H(+). The polypeptide is Probable serine/threonine-protein kinase MARK-B (mrkB) (Dictyostelium discoideum (Social amoeba)).